Here is a 911-residue protein sequence, read N- to C-terminus: Protein translocase subunit SecA (911 aa).

Residues Q87, G105 to T109, and D512 contribute to the ATP site. Residues A861–S880 are disordered. Residues C895, C897, C906, and H907 each coordinate Zn(2+).

It belongs to the SecA family. As to quaternary structure, monomer and homodimer. Part of the essential Sec protein translocation apparatus which comprises SecA, SecYEG and auxiliary proteins SecDF-YajC and YidC. It depends on Zn(2+) as a cofactor.

Its subcellular location is the cell inner membrane. The protein localises to the cytoplasm. It catalyses the reaction ATP + H2O + cellular proteinSide 1 = ADP + phosphate + cellular proteinSide 2.. In terms of biological role, part of the Sec protein translocase complex. Interacts with the SecYEG preprotein conducting channel. Has a central role in coupling the hydrolysis of ATP to the transfer of proteins into and across the cell membrane, serving both as a receptor for the preprotein-SecB complex and as an ATP-driven molecular motor driving the stepwise translocation of polypeptide chains across the membrane. The polypeptide is Protein translocase subunit SecA (Pseudomonas putida (strain ATCC 47054 / DSM 6125 / CFBP 8728 / NCIMB 11950 / KT2440)).